An 81-amino-acid polypeptide reads, in one-letter code: Small ribosomal subunit protein bS16 (81 aa).

It belongs to the bacterial ribosomal protein bS16 family.

The sequence is that of Small ribosomal subunit protein bS16 from Nautilia profundicola (strain ATCC BAA-1463 / DSM 18972 / AmH).